The following is a 142-amino-acid chain: Transcriptional regulator MraZ (142 aa).

2 SpoVT-AbrB domains span residues 5-51 and 77-120; these read SSAL…PRPE and AQDV…DAAS.

The protein belongs to the MraZ family. As to quaternary structure, forms oligomers.

Its subcellular location is the cytoplasm. The protein resides in the nucleoid. This Bordetella bronchiseptica (strain ATCC BAA-588 / NCTC 13252 / RB50) (Alcaligenes bronchisepticus) protein is Transcriptional regulator MraZ.